A 311-amino-acid polypeptide reads, in one-letter code: Meteorin-like protein (311 aa).

The N-terminal stretch at 1 to 45 is a signal peptide; sequence MRGAVWAARRRAGQQWPRSPGPGPGPPPPPPLLLLLLLLLGGASA. The cysteines at positions 52 and 75 are disulfide-linked. A glycan (N-linked (GlcNAc...) asparagine) is linked at asparagine 103. Intrachain disulfides connect cysteine 107–cysteine 143, cysteine 188–cysteine 260, cysteine 191–cysteine 284, and cysteine 201–cysteine 306.

It belongs to the meteorin family. N-glycosylated. In terms of tissue distribution, highly expressed in subcutaneous adipose tissue.

It is found in the secreted. In terms of biological role, hormone induced following exercise or cold exposure that promotes energy expenditure. Induced either in the skeletal muscle after exercise or in adipose tissue following cold exposure and is present in the circulation. Able to stimulate energy expenditure associated with the browning of the white fat depots and improves glucose tolerance. Does not promote an increase in a thermogenic gene program via direct action on adipocytes, but acts by stimulating several immune cell subtypes to enter the adipose tissue and activate their prothermogenic actions. Stimulates an eosinophil-dependent increase in IL4 expression and promotes alternative activation of adipose tissue macrophages, which are required for the increased expression of the thermogenic and anti-inflammatory gene programs in fat. Required for some cold-induced thermogenic responses, suggesting a role in metabolic adaptations to cold temperatures. This is Meteorin-like protein (Metrnl) from Mus musculus (Mouse).